The primary structure comprises 298 residues: Epimerase family protein SSP1921 (298 aa).

This sequence belongs to the NAD(P)-dependent epimerase/dehydratase family. SDR39U1 subfamily.

This chain is Epimerase family protein SSP1921, found in Staphylococcus saprophyticus subsp. saprophyticus (strain ATCC 15305 / DSM 20229 / NCIMB 8711 / NCTC 7292 / S-41).